The chain runs to 489 residues: Homoserine O-acetyltransferase (489 aa).

The region spanning 63 to 435 (NALVICHALS…SPEGHDAFLL (373 aa)) is the AB hydrolase-1 domain. Residue serine 162 is part of the active site. The Nucleophile role is filled by serine 162. The disordered stretch occupies residues 247-272 (RFGRNVPDPSKRQNINGTERLPTPPN). Residues aspartate 401 and histidine 430 contribute to the active site.

This sequence belongs to the AB hydrolase superfamily. MetX family.

The enzyme catalyses L-homoserine + acetyl-CoA = O-acetyl-L-homoserine + CoA. Its pathway is amino-acid biosynthesis; L-methionine biosynthesis via de novo pathway; O-acetyl-L-homoserine from L-homoserine: step 1/1. In terms of biological role, commits homoserine to the methionine biosynthesis pathway by catalyzing its O-acetylation. The chain is Homoserine O-acetyltransferase (metE) from Emericella nidulans (strain FGSC A4 / ATCC 38163 / CBS 112.46 / NRRL 194 / M139) (Aspergillus nidulans).